A 418-amino-acid chain; its full sequence is Probable serine hydroxymethyltransferase (418 aa).

(6S)-5,6,7,8-tetrahydrofolate contacts are provided by residues leucine 118 and 122–124 (GHL). An N6-(pyridoxal phosphate)lysine modification is found at lysine 226. 351–353 (SPF) is a binding site for (6S)-5,6,7,8-tetrahydrofolate.

Belongs to the SHMT family. As to quaternary structure, homodimer. Pyridoxal 5'-phosphate is required as a cofactor.

It localises to the cytoplasm. The catalysed reaction is (6R)-5,10-methylene-5,6,7,8-tetrahydrofolate + glycine + H2O = (6S)-5,6,7,8-tetrahydrofolate + L-serine. Its pathway is one-carbon metabolism; tetrahydrofolate interconversion. In terms of biological role, catalyzes the reversible interconversion of serine and glycine with tetrahydrofolate (THF) serving as the one-carbon carrier. This reaction serves as the major source of one-carbon groups required for the biosynthesis of purines, thymidylate, methionine, and other important biomolecules. This chain is Probable serine hydroxymethyltransferase, found in Mesomycoplasma hyopneumoniae (strain 232) (Mycoplasma hyopneumoniae).